The chain runs to 227 residues: PKHD-type hydroxylase Caul_0045 (227 aa).

Positions 78–178 (TILSPLFNRY…RTASFFWIQS (101 aa)) constitute a Fe2OG dioxygenase domain. 3 residues coordinate Fe cation: H96, D98, and H159. R169 contacts 2-oxoglutarate.

Requires Fe(2+) as cofactor. The cofactor is L-ascorbate.

The sequence is that of PKHD-type hydroxylase Caul_0045 from Caulobacter sp. (strain K31).